Reading from the N-terminus, the 200-residue chain is Peptidyl-tRNA hydrolase (200 aa).

Tyr15 serves as a coordination point for tRNA. His20 (proton acceptor) is an active-site residue. Residues Tyr66, Asn68, and Asn114 each coordinate tRNA.

This sequence belongs to the PTH family. In terms of assembly, monomer.

The protein localises to the cytoplasm. It catalyses the reaction an N-acyl-L-alpha-aminoacyl-tRNA + H2O = an N-acyl-L-amino acid + a tRNA + H(+). In terms of biological role, hydrolyzes ribosome-free peptidyl-tRNAs (with 1 or more amino acids incorporated), which drop off the ribosome during protein synthesis, or as a result of ribosome stalling. Functionally, catalyzes the release of premature peptidyl moieties from peptidyl-tRNA molecules trapped in stalled 50S ribosomal subunits, and thus maintains levels of free tRNAs and 50S ribosomes. The chain is Peptidyl-tRNA hydrolase from Paraburkholderia phytofirmans (strain DSM 17436 / LMG 22146 / PsJN) (Burkholderia phytofirmans).